The chain runs to 1468 residues: Centrosomal protein of 290 kDa (1468 aa).

Coiled-coil stretches lie at residues 1–25, 52–121, 172–292, 318–528, 559–592, 627–688, and 736–1441; these read ERQL…VGEK, SLSE…IEQA, KMYE…DEKA, VASK…EAQK, RIIL…ILSR, HTLK…QADN, and IKLK…SEQF. Residues 1060–1468 are self-association (with itself or N-terminus); it reads TTGLTVDQVM…QENPVNFPIY (409 aa). The tract at residues 1130–1152 is disordered; sequence LSKDAYSRPSTSGIDSDDHYQRE.

Part of the tectonic-like complex (also named B9 complex). Interacts with ATF4 via its N-terminal region. Associates with the BBSome complex, interacting (via N-terminus) with BBS4. Interacts with IQCB1/NPHP5; IQCB1 and CEP290/NPHP6 are proposed to form a functional NPHP5-6 module localized to the centrosome. Interacts with NPHP4; the interaction likely requires additional interactors. Interacts with ZNF423, FAM161A, CEP162, CEP162, CEP131, TALPID3, CCDC13, CC2D2A, RPGRIP1. Can self-associate (homo- or heteromeric). Interacts with CCP110; required for suppressing cilia formation. Interacts with RPGR. Associates (via C-terminus) with microtubules; association to microtubule is reduced in response to cellular stress, such as ultraviolet light (UV) radiation or heat shock, in a process that requires p38 MAP kinase signaling. Interacts with FAM161A. Interacts with PCM1. Interacts with CCDC66. Interacts with ARMC9 and CSPP1. Post-translationally, ubiquitinated. May undergo monoubiquitination; monoubiquitination is inhibited in response to cellular stress, such as ultraviolet light (UV) radiation or heat shock, but does not cause its displacement from centriolar satellites.

It localises to the cytoplasm. The protein resides in the cytoskeleton. It is found in the microtubule organizing center. Its subcellular location is the centrosome. The protein localises to the centriolar satellite. It localises to the nucleus. The protein resides in the cell projection. It is found in the cilium. Its subcellular location is the cilium basal body. The protein localises to the centriole. It localises to the cytoplasmic vesicle. Functionally, involved in early and late steps in cilia formation. Its association with CCP110 is required for inhibition of primary cilia formation by CCP110. May play a role in early ciliogenesis in the disappearance of centriolar satellites and in the transition of primary ciliar vesicles (PCVs) to capped ciliary vesicles (CCVs). Required for the centrosomal recruitment of RAB8A and for the targeting of centriole satellite proteins to centrosomes such as of PCM1. Required for the correct localization of ciliary and phototransduction proteins in retinal photoreceptor cells; may play a role in ciliary transport processes. Required for efficient recruitment of RAB8A to primary cilium. In the ciliary transition zone is part of the tectonic-like complex which is required for tissue-specific ciliogenesis and may regulate ciliary membrane composition. Involved in regulation of the BBSome complex integrity, specifically for presence of BBS2, BBS5 and BBS8/TTC8 in the complex, and in ciliary targeting of selected BBSome cargos. May play a role in controlling entry of the BBSome complex to cilia possibly implicating IQCB1/NPHP5. Activates ATF4-mediated transcription. This chain is Centrosomal protein of 290 kDa (CEP290), found in Bos taurus (Bovine).